The chain runs to 507 residues: Aldehyde dehydrogenase 1, mitochondrial (507 aa).

The N-terminal 21 residues, Met1 to Leu21, are a transit peptide targeting the mitochondrion. Residue Gly266 to Gly271 participates in NAD(+) binding. Residues Glu289 and Cys323 contribute to the active site.

This sequence belongs to the aldehyde dehydrogenase family. In terms of assembly, homotetramer.

It is found in the mitochondrion matrix. It catalyses the reaction an aldehyde + NAD(+) + H2O = a carboxylate + NADH + 2 H(+). The protein operates within alcohol metabolism; ethanol degradation; acetate from ethanol: step 2/2. This chain is Aldehyde dehydrogenase 1, mitochondrial (ALD1), found in Saccharomyces cerevisiae (Baker's yeast).